The chain runs to 175 residues: Translation initiation factor IF-3, chloroplastic (175 aa).

It belongs to the IF-3 family. In terms of assembly, monomer.

Its subcellular location is the plastid. The protein localises to the chloroplast. IF-3 binds to the 30S ribosomal subunit and shifts the equilibrium between 70S ribosomes and their 50S and 30S subunits in favor of the free subunits, thus enhancing the availability of 30S subunits on which protein synthesis initiation begins. The sequence is that of Translation initiation factor IF-3, chloroplastic from Cyanidioschyzon merolae (strain NIES-3377 / 10D) (Unicellular red alga).